The sequence spans 48 residues: uncharacterized protein (48 aa).

Residues 1–48 (MSRRMGGGMPKINLSGAIPNNNTSTPSTPTLRSSVSVSSSNSRGLFLA) are disordered. A compositionally biased stretch (low complexity) spans 20–48 (NNNTSTPSTPTLRSSVSVSSSNSRGLFLA).

This is an uncharacterized protein from Dictyostelium discoideum (Social amoeba).